The sequence spans 405 residues: S-adenosylmethionine synthase (405 aa).

Position 139-144 (139-144 (GQGSVD)) interacts with ATP.

This sequence belongs to the AdoMet synthase 2 family. Mg(2+) is required as a cofactor.

The catalysed reaction is L-methionine + ATP + H2O = S-adenosyl-L-methionine + phosphate + diphosphate. The protein operates within amino-acid biosynthesis; S-adenosyl-L-methionine biosynthesis; S-adenosyl-L-methionine from L-methionine: step 1/1. In terms of biological role, catalyzes the formation of S-adenosylmethionine from methionine and ATP. This is S-adenosylmethionine synthase from Thermococcus gammatolerans (strain DSM 15229 / JCM 11827 / EJ3).